The chain runs to 86 residues: Large ribosomal subunit protein bL28 (86 aa).

Belongs to the bacterial ribosomal protein bL28 family.

The protein is Large ribosomal subunit protein bL28 of Bacteroides thetaiotaomicron (strain ATCC 29148 / DSM 2079 / JCM 5827 / CCUG 10774 / NCTC 10582 / VPI-5482 / E50).